The following is a 146-amino-acid chain: Transcription initiation factor TFIID subunit 10b (146 aa).

Residues 16–43 (GASSHGQSSGGGGGGDRDRTTPSSHLSD) form a disordered region.

It belongs to the TAF10 family. In terms of assembly, belongs to the TFIID complex which is composed of TATA binding protein (Tbp) and a number of TBP-associated factors (TAFs). The N-terminus interacts with the histone fold of Taf8. In terms of tissue distribution, at embryonic stage 9, expression is seen in the mesodermal layer and midgut primordia. The mesoderm-specific expression persists in later stages of development and at its highest level is detected in midgut, hindgut, and differentiating somatic muscle fibers. Coexpressed with Taf10 in the lateral epidermis and anal plate.

It is found in the cytoplasm. The protein resides in the nucleus. Functionally, TFIID is a multimeric protein complex that plays a central role in mediating promoter responses to various activators and repressors. The polypeptide is Transcription initiation factor TFIID subunit 10b (Drosophila melanogaster (Fruit fly)).